A 507-amino-acid chain; its full sequence is Iroquois-class homeodomain protein IRX-3 (507 aa).

Positions R19–G39 are disordered. Gly residues predominate over residues A22 to G39. Residues D130–N192 constitute a DNA-binding region (homeobox; TALE-type). 2 disordered regions span residues K193–A398 and R416–D468. 2 stretches are compositionally biased toward acidic residues: residues R213 to E223 and E230 to N261. Pro residues-rich tracts occupy residues A314 to A342 and F418 to H428. A phosphoserine mark is found at S326 and S329. A compositionally biased stretch (low complexity) spans A436–P460.

This sequence belongs to the TALE/IRO homeobox family. Expressed by neural progenitor cells in discrete domains of the ventral neural tube. Also expressed in specific and overlapping patterns with Irx1 and Irx2 in the developing and adult metanephric kidney. In the adult metanephros, renal expression is confined to the S3 segment of the proximal tubule, in the loop of Henle.

The protein resides in the nucleus. Functionally, transcription factor involved in SHH-dependent neural patterning. Together with NKX2-2 and NKX6-1 acts to restrict the generation of motor neurons to the appropriate region of the neural tube. Belongs to the class I proteins of neuronal progenitor factors, which are repressed by SHH signals. Involved in the transcriptional repression of MNX1 in non-motor neuron cells. Acts as a regulator of energy metabolism. The polypeptide is Iroquois-class homeodomain protein IRX-3 (Irx3) (Mus musculus (Mouse)).